A 54-amino-acid polypeptide reads, in one-letter code: Protein hunchback (54 aa).

3 consecutive C2H2-type zinc fingers follow at residues Arg1–His3, Phe9–His31, and Tyr37–Leu54.

The protein belongs to the hunchback C2H2-type zinc-finger protein family.

It localises to the nucleus. Gap class segmentation protein that controls development of head structures. This chain is Protein hunchback (hb), found in Calliphora vicina (Blue blowfly).